Reading from the N-terminus, the 28-residue chain is N-acetyl-D-galactosamine-binding lectin subunit A (28 aa).

This sequence belongs to the ribosome-inactivating protein family. In terms of assembly, disulfide-linked heterodimer of A and B chains.

It catalyses the reaction Endohydrolysis of the N-glycosidic bond at one specific adenosine on the 28S rRNA.. Gal / GalNAc-specific lectin. Agglutinates both native and trypsin-treated rabbit erythrocytes but not human erythrocytes irrespective of blood group type. This Iris hollandica (Dutch iris) protein is N-acetyl-D-galactosamine-binding lectin subunit A.